Reading from the N-terminus, the 403-residue chain is Protein-export membrane protein SecD (403 aa).

Transmembrane regions (helical) follow at residues 13-33, 245-265, 285-305, 306-326, 347-367, and 368-388; these read LLVI…KGVN, FLKM…VIIA, VVFL…PALA, GIIL…DEIV, VVLA…VAGM, and GLLK…VVIT.

This sequence belongs to the SecD/SecF family. SecD subfamily. As to quaternary structure, part of the protein translocation apparatus. Forms a complex with SecF.

Its subcellular location is the cell membrane. Involved in protein export. The chain is Protein-export membrane protein SecD from Methanopyrus kandleri (strain AV19 / DSM 6324 / JCM 9639 / NBRC 100938).